We begin with the raw amino-acid sequence, 158 residues long: C-type lectin BfL-2 (158 aa).

The first 21 residues, 1–21 (MGHFTFIGLCLLAMFLSLSGA), serve as a signal peptide directing secretion. 4 disulfide bridges follow: Cys26–Cys37, Cys54–Cys154, Cys61–Cys156, and Cys129–Cys146. The C-type lectin domain occupies 33 to 155 (KNGLCYKVFS…CETLHPFICQ (123 aa)). The Mannose-binding motif lies at 119–121 (EPN). Residue Asn121 is glycosylated (N-linked (GlcNAc...) asparagine). 3 residues coordinate Ca(2+): Glu127, Asn142, and Asp143.

Belongs to the true venom lectin family. Homodimer; non-covalently linked. Expressed by the venom gland.

It localises to the secreted. In terms of biological role, mannose-binding lectin which recognizes specific carbohydrate structures and agglutinates a variety of animal cells by binding to cell-surface glycoproteins and glycolipids. May be a calcium-dependent lectin. This is C-type lectin BfL-2 from Bungarus fasciatus (Banded krait).